The chain runs to 121 residues: Small ribosomal subunit protein uS13 (121 aa).

The interval 91–121 (HRRGLPVRGQKTKNNARTRKGPVKTVANKKK) is disordered.

Belongs to the universal ribosomal protein uS13 family. In terms of assembly, part of the 30S ribosomal subunit. Forms a loose heterodimer with protein S19. Forms two bridges to the 50S subunit in the 70S ribosome.

Functionally, located at the top of the head of the 30S subunit, it contacts several helices of the 16S rRNA. In the 70S ribosome it contacts the 23S rRNA (bridge B1a) and protein L5 of the 50S subunit (bridge B1b), connecting the 2 subunits; these bridges are implicated in subunit movement. Contacts the tRNAs in the A and P-sites. The polypeptide is Small ribosomal subunit protein uS13 (Staphylococcus carnosus (strain TM300)).